The primary structure comprises 517 residues: Crotonobetaine/carnitine--CoA ligase (517 aa).

Belongs to the ATP-dependent AMP-binding enzyme family.

It catalyses the reaction 4-(trimethylamino)butanoate + ATP + CoA = 4-(trimethylamino)butanoyl-CoA + AMP + diphosphate. It carries out the reaction crotonobetaine + ATP + CoA = crotonobetainyl-CoA + AMP + diphosphate. The enzyme catalyses (R)-carnitine + ATP + CoA = (R)-carnitinyl-CoA + AMP + diphosphate. The protein operates within amine and polyamine metabolism; carnitine metabolism. In terms of biological role, catalyzes the transfer of CoA to carnitine, generating the initial carnitinyl-CoA needed for the CaiB reaction cycle. Also has activity toward crotonobetaine and gamma-butyrobetaine. The chain is Crotonobetaine/carnitine--CoA ligase from Salmonella arizonae (strain ATCC BAA-731 / CDC346-86 / RSK2980).